Here is a 154-residue protein sequence, read N- to C-terminus: Insulin-like peptide 1 (154 aa).

Residues 1–29 (MFSQHNGAAVHGLRLQSLLIAAMLTAAMA) form the signal peptide. 3 cysteine pairs are disulfide-bonded: Cys49–Cys138, Cys61–Cys151, and Cys137–Cys142. A disordered region spans residues 72 to 92 (RESLLGNSDDDEDTEQEVQDD). Positions 73–122 (ESLLGNSDDDEDTEQEVQDDSSMWQTLDGAGYSFSPLLTNLYGSEVLIKM) are cleaved as a propeptide — connecting peptide. The segment covering 79-91 (SDDDEDTEQEVQD) has biased composition (acidic residues).

It belongs to the insulin family. In terms of assembly, heterodimer of a B chain and an A chain linked by two disulfide bonds.

The protein resides in the secreted. Its function is as follows. Possible ligand of InR/insulin-like receptor. The polypeptide is Insulin-like peptide 1 (Drosophila melanogaster (Fruit fly)).